We begin with the raw amino-acid sequence, 689 residues long: Glycine--tRNA ligase beta subunit (689 aa).

The protein belongs to the class-II aminoacyl-tRNA synthetase family. In terms of assembly, tetramer of two alpha and two beta subunits.

The protein localises to the cytoplasm. The catalysed reaction is tRNA(Gly) + glycine + ATP = glycyl-tRNA(Gly) + AMP + diphosphate. This Cronobacter sakazakii (strain ATCC BAA-894) (Enterobacter sakazakii) protein is Glycine--tRNA ligase beta subunit.